Reading from the N-terminus, the 303-residue chain is uncharacterized protein (303 aa).

This is an uncharacterized protein from Haemophilus influenzae (strain ATCC 51907 / DSM 11121 / KW20 / Rd).